The chain runs to 760 residues: Photosystem I P700 chlorophyll a apoprotein A1 (760 aa).

Residues 1–22 are disordered; that stretch reads MTISPPESGEKDKKILESPVKA. A compositionally biased stretch (basic and acidic residues) spans 8–22; it reads SGEKDKKILESPVKA. The next 8 helical transmembrane spans lie at 76–99, 162–185, 201–225, 309–327, 368–391, 407–433, 455–477, and 551–569; these read IFSA…FHGA, LMAL…FHYH, MNHH…HIGA, IAHH…GHMY, RHAQ…HHMY, LGLF…IAMV, ALIS…LYIH, and LMIH…LILL. [4Fe-4S] cluster is bound by residues cysteine 593 and cysteine 602. 2 helical membrane passes run 609–630 and 674–696; these read HVFL…HFSW and ISMY…MFLF. Histidine 685 serves as a coordination point for divinylchlorophyll a'. Divinyl chlorophyll a-binding residues include methionine 693 and tyrosine 701. Tryptophan 702 contributes to the phylloquinone binding site. Residues 734-754 form a helical membrane-spanning segment; the sequence is AVGVTHFLVGGIATTWAFFHA.

The protein belongs to the PsaA/PsaB family. In terms of assembly, the PsaA/B heterodimer binds the P700 divinyl chlorophyll special pair and subsequent electron acceptors. PSI consists of a core antenna complex that captures photons, and an electron transfer chain that converts photonic excitation into a charge separation. The cyanobacterial PSI reaction center is composed of one copy each of PsaA,B,C,D,E,F,I,J,K,L,M and X, and forms trimeric complexes. Requires PSI electron transfer chain: 5 divinyl chlorophyll a, 1 divinyl chlorophyll a', 2 phylloquinones and 3 4Fe-4S clusters. PSI core antenna: 90 divinyl chlorophyll a, 22 carotenoids, 3 phospholipids and 1 galactolipid. P700 is a divinyl chlorophyll a/divinyl chlorophyll a' dimer, A0 is one or more divinyl chlorophyll a, A1 is one or both phylloquinones and FX is a shared 4Fe-4S iron-sulfur center. as cofactor.

The protein localises to the cellular thylakoid membrane. The catalysed reaction is reduced [plastocyanin] + hnu + oxidized [2Fe-2S]-[ferredoxin] = oxidized [plastocyanin] + reduced [2Fe-2S]-[ferredoxin]. Its function is as follows. PsaA and PsaB bind P700, the primary electron donor of photosystem I (PSI), as well as the electron acceptors A0, A1 and FX. PSI is a plastocyanin/cytochrome c6-ferredoxin oxidoreductase, converting photonic excitation into a charge separation, which transfers an electron from the donor P700 chlorophyll pair to the spectroscopically characterized acceptors A0, A1, FX, FA and FB in turn. Oxidized P700 is reduced on the lumenal side of the thylakoid membrane by plastocyanin or cytochrome c6. This Prochlorococcus marinus (strain MIT 9515) protein is Photosystem I P700 chlorophyll a apoprotein A1.